Reading from the N-terminus, the 1073-residue chain is 3-hydroxy-3-methylglutaryl-coenzyme A reductase 1 (1073 aa).

8 helical membrane passes run 23-43 (FMVV…DDYI), 181-201 (FDIL…IKVF), 211-231 (FWLA…ALLV), 298-318 (HLVV…LTGL), 326-346 (SLIL…ILGL), 399-419 (IAYF…FWLG), 459-479 (GTVV…MVQL), and 498-518 (IISK…VYFL). In terms of domain architecture, SSD spans 182 to 346 (DILLIFVAYL…YTFFSAILGL (165 aa)). Over residues 542-565 (SSVTATTTTTATGTTSSGAATSKT) the composition is skewed to low complexity. The disordered stretch occupies residues 542-589 (SSVTATTTTTATGTTSSGAATSKTIGNNKGLKSVQEIPDNEDESSDEE). Residues 579–589 (PDNEDESSDEE) are compositionally biased toward acidic residues. Catalysis depends on Glu-714, which acts as the Charge relay system. 720 to 726 (STMRGCK) contacts CoA. Residues 781–783 (SRF) and 808–816 (DAMGMNMIS) contribute to the NADP(+) site. Residue Lys-848 is the Charge relay system of the active site. 877 to 879 (VLK) is a CoA binding site. Asp-924 serves as the catalytic Charge relay system. The chain crosses the membrane as a helical span at residues 997 to 1017 (IVASAVLAAELSLCSALAAGH). Residue 1021-1022 (SH) coordinates CoA. His-1022 (proton donor) is an active-site residue. The disordered stretch occupies residues 1025–1056 (HNRSKAPAAGATTTTTPAITDSKASNGSIASN). 1026–1027 (NR) lines the NADP(+) pocket. Low complexity predominate over residues 1030–1042 (APAAGATTTTTPA). Polar residues predominate over residues 1046–1055 (SKASNGSIAS).

The protein belongs to the HMG-CoA reductase family.

It is found in the endoplasmic reticulum membrane. It carries out the reaction (R)-mevalonate + 2 NADP(+) + CoA = (3S)-3-hydroxy-3-methylglutaryl-CoA + 2 NADPH + 2 H(+). The protein operates within metabolic intermediate biosynthesis; (R)-mevalonate biosynthesis; (R)-mevalonate from acetyl-CoA: step 3/3. Its function is as follows. HMG-CoA reductase; part of the first module of ergosterol biosynthesis pathway that includes the early steps of the pathway, conserved across all eukaryotes, and which results in the formation of mevalonate from acetyl-coenzyme A (acetyl-CoA). HMG1 catalyzes the reduction of hydroxymethylglutaryl-CoA (HMG-CoA) to mevalonate. The first module starts with the action of the cytosolic acetyl-CoA acetyltransferase ERG10 that catalyzes the formation of acetoacetyl-CoA. The hydroxymethylglutaryl-CoA synthase ERG13 then condenses acetyl-CoA with acetoacetyl-CoA to form HMG-CoA. The 3-hydroxy-3-methylglutaryl-coenzyme A (HMG-CoA) reductase HMG1 finally reduces HMG-CoA to produce mevalonate. The polypeptide is 3-hydroxy-3-methylglutaryl-coenzyme A reductase 1 (Candida albicans (strain SC5314 / ATCC MYA-2876) (Yeast)).